A 152-amino-acid polypeptide reads, in one-letter code: Methylglyoxal synthase (152 aa).

The MGS-like domain maps to 6–152 (RTMATAKNIA…YQHYLNGRLK (147 aa)). Residues His-19, Lys-23, 45–48 (TGTT), and 65–66 (SG) each bind substrate. Asp-71 acts as the Proton donor/acceptor in catalysis. His-98 contributes to the substrate binding site.

It belongs to the methylglyoxal synthase family.

It catalyses the reaction dihydroxyacetone phosphate = methylglyoxal + phosphate. Functionally, catalyzes the formation of methylglyoxal from dihydroxyacetone phosphate. In Photorhabdus laumondii subsp. laumondii (strain DSM 15139 / CIP 105565 / TT01) (Photorhabdus luminescens subsp. laumondii), this protein is Methylglyoxal synthase.